We begin with the raw amino-acid sequence, 499 residues long: Phenylalanine--tRNA ligase alpha subunit (499 aa).

L-phenylalanine-binding positions include threonine 342, 381–383 (QID), and phenylalanine 422. Residue glutamate 424 participates in Mg(2+) binding. Phenylalanine 447 lines the L-phenylalanine pocket.

Belongs to the class-II aminoacyl-tRNA synthetase family. Phe-tRNA synthetase alpha subunit type 2 subfamily. In terms of assembly, tetramer of two alpha and two beta subunits. It depends on Mg(2+) as a cofactor.

The protein localises to the cytoplasm. The enzyme catalyses tRNA(Phe) + L-phenylalanine + ATP = L-phenylalanyl-tRNA(Phe) + AMP + diphosphate + H(+). The sequence is that of Phenylalanine--tRNA ligase alpha subunit from Pyrococcus horikoshii (strain ATCC 700860 / DSM 12428 / JCM 9974 / NBRC 100139 / OT-3).